A 186-amino-acid chain; its full sequence is Peptidyl-tRNA hydrolase (186 aa).

Residue Y14 coordinates tRNA. The Proton acceptor role is filled by H19. TRNA is bound by residues Y61, N63, and N107.

This sequence belongs to the PTH family. As to quaternary structure, monomer.

It is found in the cytoplasm. The enzyme catalyses an N-acyl-L-alpha-aminoacyl-tRNA + H2O = an N-acyl-L-amino acid + a tRNA + H(+). Hydrolyzes ribosome-free peptidyl-tRNAs (with 1 or more amino acids incorporated), which drop off the ribosome during protein synthesis, or as a result of ribosome stalling. In terms of biological role, catalyzes the release of premature peptidyl moieties from peptidyl-tRNA molecules trapped in stalled 50S ribosomal subunits, and thus maintains levels of free tRNAs and 50S ribosomes. The chain is Peptidyl-tRNA hydrolase from Helicobacter acinonychis (strain Sheeba).